Here is a 636-residue protein sequence, read N- to C-terminus: DNA ligase (636 aa).

Lys113 acts as the N6-AMP-lysine intermediate in catalysis. In terms of domain architecture, BRCT spans 560-636; the sequence is NSEGIFQNQT…KSSFSKKFEK (77 aa).

The protein belongs to the NAD-dependent DNA ligase family.

It carries out the reaction NAD(+) + (deoxyribonucleotide)n-3'-hydroxyl + 5'-phospho-(deoxyribonucleotide)m = (deoxyribonucleotide)n+m + AMP + beta-nicotinamide D-nucleotide.. Functionally, catalyzes the formation of phosphodiester linkages between 5'-phosphoryl and 3'-hydroxyl groups in double-stranded DNA using NAD as a coenzyme and as the energy source for the reaction. The sequence is that of DNA ligase from Acanthamoeba polyphaga (Amoeba).